Consider the following 239-residue polypeptide: Cysteine-rich venom protein (239 aa).

Residues 1–19 form the signal peptide; that stretch reads MIAFLVLPILAAVLQQSSG. An SCP domain is found at 39–166; sequence DLHNSLRRSV…EYKYFYVCQY (128 aa). Intrachain disulfides connect C75–C153, C92–C167, C148–C164, C186–C193, C189–C198, C202–C234, C211–C228, and C219–C232. The ShKT domain occupies 202-234; it reads CTHEDKFTNCKDLVKQGCNNNYLKTNCPASCSC.

The protein belongs to the CRISP family. In terms of tissue distribution, expressed by the venom gland.

Its subcellular location is the secreted. In terms of biological role, blocks contraction of smooth muscle elicited by high potassium-induced depolarization, but does not block caffeine-stimulated contraction. May target voltage-gated calcium channels in smooth muscle. This chain is Cysteine-rich venom protein, found in Vipera berus (Common European adder).